The chain runs to 323 residues: NADH-ubiquinone oxidoreductase chain 1 (323 aa).

A run of 8 helical transmembrane segments spans residues 9-29 (ILNPLIYMVPVLLAVAFLTLI), 76-96 (LFVLPVLALTLALTLWAPMPM), 107-127 (ILFVLALSSLAVYSILGSGWA), 145-165 (ISYEVSLGLILLSVIIFSGGF), 175-195 (EATWLALPAWPLAAMWYISTL), 227-247 (LFFLAEYANILLMNTLSAVLF), 258-278 (EFTSLTLMTKAALLSMVFLWV), and 298-318 (FLPLTLALVIWHLSLSTACAG).

Belongs to the complex I subunit 1 family.

The protein resides in the mitochondrion inner membrane. The catalysed reaction is a ubiquinone + NADH + 5 H(+)(in) = a ubiquinol + NAD(+) + 4 H(+)(out). Functionally, core subunit of the mitochondrial membrane respiratory chain NADH dehydrogenase (Complex I) that is believed to belong to the minimal assembly required for catalysis. Complex I functions in the transfer of electrons from NADH to the respiratory chain. The immediate electron acceptor for the enzyme is believed to be ubiquinone. The polypeptide is NADH-ubiquinone oxidoreductase chain 1 (MT-ND1) (Gadus morhua (Atlantic cod)).